Reading from the N-terminus, the 300-residue chain is Diaminopimelate epimerase (300 aa).

Asparagine 15, glutamine 47, and asparagine 67 together coordinate substrate. Catalysis depends on cysteine 76, which acts as the Proton donor. Residues 77–78 (GN), asparagine 163, asparagine 197, and 215–216 (ER) each bind substrate. Cysteine 224 serves as the catalytic Proton acceptor. 225-226 (GS) lines the substrate pocket. The disordered stretch occupies residues 275–300 (SGTFDPATGEWSRDAQNDKPTDRGAA). Over residues 285–300 (WSRDAQNDKPTDRGAA) the composition is skewed to basic and acidic residues.

This sequence belongs to the diaminopimelate epimerase family. As to quaternary structure, homodimer.

It localises to the cytoplasm. It catalyses the reaction (2S,6S)-2,6-diaminopimelate = meso-2,6-diaminopimelate. It participates in amino-acid biosynthesis; L-lysine biosynthesis via DAP pathway; DL-2,6-diaminopimelate from LL-2,6-diaminopimelate: step 1/1. In terms of biological role, catalyzes the stereoinversion of LL-2,6-diaminopimelate (L,L-DAP) to meso-diaminopimelate (meso-DAP), a precursor of L-lysine and an essential component of the bacterial peptidoglycan. The polypeptide is Diaminopimelate epimerase (Brucella anthropi (strain ATCC 49188 / DSM 6882 / CCUG 24695 / JCM 21032 / LMG 3331 / NBRC 15819 / NCTC 12168 / Alc 37) (Ochrobactrum anthropi)).